A 70-amino-acid chain; its full sequence is DNA gyrase inhibitor YacG (70 aa).

The span at 1 to 15 (MPEDKKAAAKVEPLR) shows a compositional bias: basic and acidic residues. The interval 1–22 (MPEDKKAAAKVEPLRKTRPCPE) is disordered. Zn(2+) is bound by residues Cys20, Cys23, Cys35, and Cys39.

This sequence belongs to the DNA gyrase inhibitor YacG family. Interacts with GyrB. It depends on Zn(2+) as a cofactor.

Its function is as follows. Inhibits all the catalytic activities of DNA gyrase by preventing its interaction with DNA. Acts by binding directly to the C-terminal domain of GyrB, which probably disrupts DNA binding by the gyrase. This is DNA gyrase inhibitor YacG from Rhizobium johnstonii (strain DSM 114642 / LMG 32736 / 3841) (Rhizobium leguminosarum bv. viciae).